The sequence spans 176 residues: Peptide deformylase (176 aa).

Residues Cys97 and His139 each coordinate Fe cation. The active site involves Glu140. Fe cation is bound at residue His143.

Belongs to the polypeptide deformylase family. The cofactor is Fe(2+).

The enzyme catalyses N-terminal N-formyl-L-methionyl-[peptide] + H2O = N-terminal L-methionyl-[peptide] + formate. Its function is as follows. Removes the formyl group from the N-terminal Met of newly synthesized proteins. Requires at least a dipeptide for an efficient rate of reaction. N-terminal L-methionine is a prerequisite for activity but the enzyme has broad specificity at other positions. This is Peptide deformylase from Thermomicrobium roseum (strain ATCC 27502 / DSM 5159 / P-2).